The following is a 93-amino-acid chain: Phosphoribosyl-ATP pyrophosphatase (93 aa).

Belongs to the PRA-PH family.

It localises to the cytoplasm. It catalyses the reaction 1-(5-phospho-beta-D-ribosyl)-ATP + H2O = 1-(5-phospho-beta-D-ribosyl)-5'-AMP + diphosphate + H(+). It participates in amino-acid biosynthesis; L-histidine biosynthesis; L-histidine from 5-phospho-alpha-D-ribose 1-diphosphate: step 2/9. The chain is Phosphoribosyl-ATP pyrophosphatase from Rhodococcus erythropolis (strain PR4 / NBRC 100887).